Here is a 299-residue protein sequence, read N- to C-terminus: Porphobilinogen deaminase (299 aa).

At Cys242 the chain carries S-(dipyrrolylmethanemethyl)cysteine.

This sequence belongs to the HMBS family. As to quaternary structure, monomer. It depends on dipyrromethane as a cofactor.

It carries out the reaction 4 porphobilinogen + H2O = hydroxymethylbilane + 4 NH4(+). It functions in the pathway porphyrin-containing compound metabolism; protoporphyrin-IX biosynthesis; coproporphyrinogen-III from 5-aminolevulinate: step 2/4. Its function is as follows. Tetrapolymerization of the monopyrrole PBG into the hydroxymethylbilane pre-uroporphyrinogen in several discrete steps. This is Porphobilinogen deaminase (hemC) from Rickettsia prowazekii (strain Madrid E).